A 439-amino-acid chain; its full sequence is Protein ABHD8 (439 aa).

2 disordered regions span residues 54–75 and 122–148; these read HAGP…PGVK and ELAE…RPKR. The segment covering 58–67 has biased composition (pro residues); it reads APIPTPPPPP. Residues 138–148 are compositionally biased toward basic residues; it reads GRRRRPRRPKR. Residues 169–271 form the AB hydrolase-1 domain; sequence VLFFIHGVGG…HKVIMINGGG (103 aa). Catalysis depends on charge relay system residues Ser-244, Asp-362, and His-390. Positions 415 to 439 are disordered; sequence EAEPKLEPKPKPQLLQPEPAPGEEK.

Belongs to the AB hydrolase superfamily. Interacts with NLRP3 (via NACHT and LLR domains); this interaction is enhanced in the presence of NLRP3 inflammasome inducers, such as ATP, nigericin, silica, or alum. Interacts with ZDHHC12.

It is found in the cytoplasm. Functionally, negatively regulates NLRP3-driven inflammation. Promotes NLRP3 degradation through the chaperone-mediated autophagy (CMA) pathway, hence attenuating inflammasome activation and IL1B secretion. Acts by recruiting palmitoyltransferase ZDHHC12 to NLRP3, facilitating NLRP3 palmitoylation and subsequent degradation. This Mus musculus (Mouse) protein is Protein ABHD8.